We begin with the raw amino-acid sequence, 338 residues long: Ornithine carbamoyltransferase (338 aa).

Carbamoyl phosphate-binding positions include Arg-116 and 143-146; that span reads HPCQ. Residues Asn-174, Asp-235, and 239 to 240 each bind L-ornithine; that span reads SM. Cys-275 and Arg-303 together coordinate carbamoyl phosphate.

This sequence belongs to the aspartate/ornithine carbamoyltransferase superfamily. OTCase family.

It is found in the cytoplasm. The enzyme catalyses carbamoyl phosphate + L-ornithine = L-citrulline + phosphate + H(+). Its pathway is amino-acid biosynthesis; L-arginine biosynthesis; L-arginine from L-ornithine and carbamoyl phosphate: step 1/3. Reversibly catalyzes the transfer of the carbamoyl group from carbamoyl phosphate (CP) to the N(epsilon) atom of ornithine (ORN) to produce L-citrulline. This is Ornithine carbamoyltransferase from Chlorobaculum tepidum (strain ATCC 49652 / DSM 12025 / NBRC 103806 / TLS) (Chlorobium tepidum).